Here is a 161-residue protein sequence, read N- to C-terminus: Anthrone oxygenase tpcL (161 aa).

N-linked (GlcNAc...) asparagine glycosylation is present at N4. A run of 4 helical transmembrane segments spans residues 15–35 (VITGSFLSGLMMGLSVVDIPV), 56–74 (IGHKMMPSLAVTTCLLYGY), 87–107 (LPHIIAAVTTISMVPFTWLVM), and 136–155 (WAQLHAVRSLFPLMGSVLGL).

The protein belongs to the anthrone oxygenase family. Specifically expressed in conidia.

It is found in the membrane. It catalyses the reaction emodin anthrone + O2 = emodin + H2O + H(+). It functions in the pathway secondary metabolite biosynthesis. Functionally, anthrone oxygenase; part of the gene cluster that mediates the biosynthesis of trypacidin, a mycotoxin with antiprotozoal activity and that plays a role in the infection process. The pathway begins with the synthesis of atrochrysone thioester by the polyketide synthase (PKS) tpcC. The atrochrysone carboxyl ACP thioesterase tpcB then breaks the thioester bond and releases the atrochrysone carboxylic acid from tpcC. The decarboxylase tpcK converts atrochrysone carboxylic acid to atrochrysone which is further reduced into emodin anthrone. The next step is performed by the emodin anthrone oxygenase tpcL that catalyzes the oxidation of emodinanthrone to emodin. Emodin O-methyltransferase encoded by tpcA catalyzes methylation of the 8-hydroxy group of emodin to form questin. Ring cleavage of questin by questin oxidase tpcI leads to desmethylsulochrin via several intermediates including questin epoxide. Another methylation step catalyzed by tpcM leads to the formation of sulochrin which is further converted to monomethylsulfochrin by tpcH. Finally, the tpcJ catalyzes the conversion of monomethylsulfochrin to trypacidin. Trypacidin is toxic for human pulmonary and bronchial epithelial cells by initiating the intracellular formation of nitric oxide (NO) and hydrogen peroxide (H(2)O(2)), thus triggering host necrotic cell death. The trypacidin pathway is also able to produce endocrocin via a distinct route from the endocrocin Enc pathway. The polypeptide is Anthrone oxygenase tpcL (Aspergillus fumigatus (strain ATCC MYA-4609 / CBS 101355 / FGSC A1100 / Af293) (Neosartorya fumigata)).